Consider the following 92-residue polypeptide: Acylphosphatase (92 aa).

An Acylphosphatase-like domain is found at 5–92; it reads GVTIYVYGRV…EDIADFIVRH (88 aa). Residues Arg20 and Asn38 contribute to the active site.

This sequence belongs to the acylphosphatase family.

The enzyme catalyses an acyl phosphate + H2O = a carboxylate + phosphate + H(+). The polypeptide is Acylphosphatase (acyP) (Photorhabdus laumondii subsp. laumondii (strain DSM 15139 / CIP 105565 / TT01) (Photorhabdus luminescens subsp. laumondii)).